Here is a 299-residue protein sequence, read N- to C-terminus: GTPase Era (299 aa).

The region spanning 5 to 172 (KSGFVSIIGR…IDVLKSFLPE (168 aa)) is the Era-type G domain. Residues 13 to 20 (GRPNVGKS) are G1. GTP is bound at residue 13–20 (GRPNVGKS). Residues 39–43 (QTTRN) form a G2 region. Positions 60-63 (DTPG) are G3. Residues 60-64 (DTPGI) and 122-125 (NKID) contribute to the GTP site. A G4 region spans residues 122 to 125 (NKID). Positions 151–153 (ISA) are G5. The 78-residue stretch at 203 to 280 (TSEEIPHAIG…YLELWVKVQR (78 aa)) folds into the KH type-2 domain.

It belongs to the TRAFAC class TrmE-Era-EngA-EngB-Septin-like GTPase superfamily. Era GTPase family. Monomer.

The protein resides in the cytoplasm. It localises to the cell membrane. In terms of biological role, an essential GTPase that binds both GDP and GTP, with rapid nucleotide exchange. Plays a role in 16S rRNA processing and 30S ribosomal subunit biogenesis and possibly also in cell cycle regulation and energy metabolism. This chain is GTPase Era, found in Staphylococcus epidermidis (strain ATCC 12228 / FDA PCI 1200).